Consider the following 378-residue polypeptide: Carbamoyl phosphate synthase small chain (378 aa).

The interval 1 to 189 is CPSase; the sequence is MTKPAILALA…DSHPTIDAAD (189 aa). Residues Ser-47, Gly-241, and Gly-243 each coordinate L-glutamine. The 186-residue stretch at 193–378 folds into the Glutamine amidotransferase type-1 domain; that stretch reads HVVAFDYGVK…RFTDAMAKRR (186 aa). Cys-269 serves as the catalytic Nucleophile. L-glutamine is bound by residues Leu-270, Gln-273, Asn-311, Gly-313, and Phe-314. Residues His-353 and Glu-355 contribute to the active site.

This sequence belongs to the CarA family. As to quaternary structure, composed of two chains; the small (or glutamine) chain promotes the hydrolysis of glutamine to ammonia, which is used by the large (or ammonia) chain to synthesize carbamoyl phosphate. Tetramer of heterodimers (alpha,beta)4.

The catalysed reaction is hydrogencarbonate + L-glutamine + 2 ATP + H2O = carbamoyl phosphate + L-glutamate + 2 ADP + phosphate + 2 H(+). It carries out the reaction L-glutamine + H2O = L-glutamate + NH4(+). It participates in amino-acid biosynthesis; L-arginine biosynthesis; carbamoyl phosphate from bicarbonate: step 1/1. Its pathway is pyrimidine metabolism; UMP biosynthesis via de novo pathway; (S)-dihydroorotate from bicarbonate: step 1/3. Functionally, small subunit of the glutamine-dependent carbamoyl phosphate synthetase (CPSase). CPSase catalyzes the formation of carbamoyl phosphate from the ammonia moiety of glutamine, carbonate, and phosphate donated by ATP, constituting the first step of 2 biosynthetic pathways, one leading to arginine and/or urea and the other to pyrimidine nucleotides. The small subunit (glutamine amidotransferase) binds and cleaves glutamine to supply the large subunit with the substrate ammonia. This is Carbamoyl phosphate synthase small chain from Pseudomonas putida (strain ATCC 47054 / DSM 6125 / CFBP 8728 / NCIMB 11950 / KT2440).